A 366-amino-acid polypeptide reads, in one-letter code: Inhibin alpha chain (366 aa).

The signal sequence occupies residues 1 to 20; that stretch reads MVIQPSLLLLLLLTLQDVDS. The propeptide occupies 21-63; sequence CQGPELVRELVLAKVKALFLDALGPPAMDGEGGGPGIRRLPRR. A propeptide spans 64-233 (inhibin alpha N-terminal region); the sequence is HALGGFMHRT…APSAGERARR (170 aa). 2 N-linked (GlcNAc...) asparagine glycosylation sites follow: Asn147 and Asn269. 3 disulfide bridges follow: Cys263–Cys328, Cys292–Cys363, and Cys296–Cys365.

Belongs to the TGF-beta family. Dimeric, linked by one or more disulfide bonds. Activin B is a dimer of alpha and beta-B. Inhibin A is a dimer of alpha and beta-A. Inhibin B is a dimer of alpha and beta-B. Interacts with TGFBR3L; this interaction regulates female fertility. Post-translationally, proteolytic processing yields a number of bioactive forms, consisting either solely of the mature alpha chain, of the most N-terminal propeptide linked through a disulfide bond to the mature alpha chain, or of the entire proprotein. Mainly expressed in ovary and testis. Alpha- and beta-B-subunits are the predominant forms found in testis. Also found in placenta, pituitary, adrenal gland, bone marrow, kidney, spinal cord and brain.

Its subcellular location is the secreted. In terms of biological role, inhibins and activins inhibit and activate, respectively, the secretion of follitropin by the pituitary gland. Inhibins/activins are involved in regulating a number of diverse functions such as hypothalamic and pituitary hormone secretion, gonadal hormone secretion, germ cell development and maturation, erythroid differentiation, insulin secretion, nerve cell survival, embryonic axial development or bone growth, depending on their subunit composition. Inhibins appear to oppose the functions of activins. Its function is as follows. Inhibin A is a dimer of alpha/INHA and beta-A/INHBA that functions as a feedback regulator in the hypothalamic-pituitary-gonadal (HPG) axis. Inhibits the secretion of FSH from the anterior pituitary gland by acting on pituitary gonadotrope cells. Antagonizes activin A by binding to the proteoglycan, betaglycan, and forming a stable complex with and, thereby, sequestering type II activin receptors while excluding type I receptor. Inhibin B is a dimer of alpha and beta-B that plays a crucial role in the regulation of the reproductive system by inhibiting the secretion of follicle-stimulating hormone (FSH) from the anterior pituitary gland. Thereby, maintains reproductive homeostasis in both males and females. Acts as a more potent suppressor of FSH release than inhibin A. Functions as competitive receptor antagonist binding activin type II receptors with high affinity in the presence of the TGF-beta type III coreceptor/TGFBR3L. This Rattus norvegicus (Rat) protein is Inhibin alpha chain (Inha).